The primary structure comprises 446 residues: T-box transcription factor TBX19 (446 aa).

A DNA-binding region (T-box) is located at residues 43–216 (LEDAPLWQRF…YNPFAKAFLD (174 aa)).

Its subcellular location is the nucleus. Functionally, transcriptional regulator involved in developmental processes. Can activate POMC gene expression and repress the alpha glycoprotein subunit and thyroid-stimulating hormone beta promoters. The protein is T-box transcription factor TBX19 of Mus musculus (Mouse).